The sequence spans 563 residues: Arginine--tRNA ligase (563 aa).

The 'HIGH' region motif lies at 123–133; sequence PNIAKDMHVGH.

It belongs to the class-I aminoacyl-tRNA synthetase family. In terms of assembly, monomer.

It localises to the cytoplasm. It carries out the reaction tRNA(Arg) + L-arginine + ATP = L-arginyl-tRNA(Arg) + AMP + diphosphate. The protein is Arginine--tRNA ligase (argS) of Chlamydia trachomatis serovar D (strain ATCC VR-885 / DSM 19411 / UW-3/Cx).